A 1441-amino-acid polypeptide reads, in one-letter code: MYSNPNSFLGGNSQRPGQPQYGNQFGAGAGQPQLQQPGPFAPQPTGFGQQPALQQQYTGYPGLQAPQPTGQLQPQFTGFGQAPQQNVGAAAPPMPAMPQQFQQQFQQQQQQFQQQPQQTSSPFGAAPSQQPPASALAPPAPPMKPQPTGFHEMAASFQTAGGSKSTASAPRKTNKIPNIRLSFITAQDQAKFETLFKSAVGDGQTTMTGEKARDLLLRSRLDGDSLSHIWTLADTTRSGQLHFPEFALAMYLCNLKLTGKTLPEHLPENIKNEVSSMVDIINFSVAEEAANASDSGIRQNTATPPVIQHPQPQPSNSQLLQAQMTGFPSQQTGFLGAQPTGMPQATGYTGPRPPMPPMPTGFGSSLTPNAGPGGMVAPLNAQPTGIPGQWGLVNTPATGLPLIDALQARMMPQQGREQQTYTTAGLQGNAVIPWAITKDEKTRYDSLFRAWDGLHKGYISGDQAIEILGQSGLEKPDLERVWTLADNGNKGRLDMDEFAVAMHLIYRKLNGYPVPNQLPPELVPPSTRNFNQSIGMVKNMLHQESEYRKNSGAALLPQKTGVSYLKGHSFKGAGAGFGNRKDATVFKNNDEEVGYRSSARRRVGNNSPRPESPASVNSSEELSIEQLRKKIKEKQVLLDAMDFADEKHAEEDDILDRRDRREADELYRRIRRIQEDIDNHPDASLISADSDAERRALKRQLQNLTDKIPDLASQVRKTEKAIADARLELFRLRDAKAHPSSAAAIIGTGPGGTVTESDRLKARAKAMMQQRTAALTGKKIEVSNDDLDAPKRLEEESIKIRTEKENNERMVRDVEDSVREFAKGIEDNMKEGAQDSTTEHEKRRWEDGLGVEDEVRDFIYDLQRSSRAARIRSQDRQGGRQPTQEPTRAEAPPSARSVSPAVSRTSTPSAPVAGGGSYSSYKTPEERAAFIKQQAEQRMAERLAALGIKAPTKPGETAAQRMERERAERAAKLRQAEEEDARREAERQARIAEETGAPAPAAQAAVPKPEGKKPPPPPSRKTPKVDDRRAEEEAAARKAEEGRLERERGEQERQTRELEERAKDQEDELAKERAEADARLKALEEQVRQGKLKKEEEKRKKKAAMAEAKEQEAKLAQRRAEIEAARKREEELRKQLEALDVEDSSSDDDEGPEQITPQASTPTLGGSQVGGSQELEPAPPTPVPAPVQSPPQIVTSSPAETESRNPYFRMRAQAAETTPAPPAPPAPVAPPPPPQPDVSTNPFHRMTQAAAAPAPSGPVSRKRPEDDGWGSDKEDDDEDSDDDRPGQGAAHLASILFGTMAPPRPLSATGDKSAAASPPVTSPVASPPPAIPSPTAAGAPPAPPPPPPMPGMGAPPPPPPPPPMPGSGAPAAPPPPPPPAPGGAPPPPPPPPPPPGGAPAPAAPAGGRPAAFLGEIQAGRALRKTQTKDKSGAAVAGRVLD.

A compositionally biased stretch (polar residues) spans 1-23 (MYSNPNSFLGGNSQRPGQPQYGN). The interval 1-150 (MYSNPNSFLG…PPMKPQPTGF (150 aa)) is disordered. Low complexity predominate over residues 24-38 (QFGAGAGQPQLQQPG). Composition is skewed to polar residues over residues 46-58 (GFGQ…QQYT) and 66-87 (PQPT…QQNV). Residues 97-137 (MPQQFQQQFQQQQQQFQQQPQQTSSPFGAAPSQQPPASALA) show a composition bias toward low complexity. The 90-residue stretch at 188–277 (DQAKFETLFK…ENIKNEVSSM (90 aa)) folds into the EH 1 domain. One can recognise an EF-hand 1 domain in the interval 221–256 (LDGDSLSHIWTLADTTRSGQLHFPEFALAMYLCNLK). Positions 292–303 (ASDSGIRQNTAT) are enriched in polar residues. The tract at residues 292 to 316 (ASDSGIRQNTATPPVIQHPQPQPSN) is disordered. Residues 440–529 (EKTRYDSLFR…PELVPPSTRN (90 aa)) enclose the EH 2 domain. An EF-hand 2 domain is found at 473-508 (LEKPDLERVWTLADNGNKGRLDMDEFAVAMHLIYRK). The tract at residues 594–622 (GYRSSARRRVGNNSPRPESPASVNSSEEL) is disordered. The span at 604–621 (GNNSPRPESPASVNSSEE) shows a compositional bias: polar residues. Coiled coils occupy residues 618-735 (SSEE…LRDA) and 791-820 (KRLE…SVRE). 2 disordered regions span residues 824-845 (GIED…KRRW) and 867-1441 (RAAR…RVLD). A compositionally biased stretch (low complexity) spans 891–911 (APPSARSVSPAVSRTSTPSAP). 2 coiled-coil regions span residues 956 to 997 (ETAA…ETGA) and 1028 to 1143 (RRAE…DVED). The span at 961 to 993 (RMERERAERAAKLRQAEEEDARREAERQARIAE) shows a compositional bias: basic and acidic residues. The span at 994 to 1008 (ETGAPAPAAQAAVPK) shows a compositional bias: low complexity. 2 stretches are compositionally biased toward basic and acidic residues: residues 1023–1098 (PKVD…EEEK) and 1107–1137 (EAKE…KQLE). The span at 1139-1152 (LDVEDSSSDDDEGP) shows a compositional bias: acidic residues. Over residues 1155 to 1166 (ITPQASTPTLGG) the composition is skewed to polar residues. Composition is skewed to pro residues over residues 1177 to 1189 (PAPP…PVQS) and 1219 to 1236 (PAPP…PPQP). A compositionally biased stretch (basic and acidic residues) spans 1262–1272 (KRPEDDGWGSD). Positions 1273–1282 (KEDDDEDSDD) are enriched in acidic residues. Low complexity predominate over residues 1313–1324 (SAAASPPVTSPV). The span at 1340-1402 (PPAPPPPPPM…PPPGGAPAPA (63 aa)) shows a compositional bias: pro residues.

The protein belongs to the PAN1 family. In terms of assembly, component of the PAN1 actin cytoskeleton-regulatory complex.

It localises to the cell membrane. Its subcellular location is the endosome membrane. It is found in the cytoplasm. The protein resides in the cytoskeleton. The protein localises to the actin patch. Component of the PAN1 actin cytoskeleton-regulatory complex required for the internalization of endosomes during actin-coupled endocytosis. The complex links the site of endocytosis to the cell membrane-associated actin cytoskeleton. Mediates uptake of external molecules and vacuolar degradation of plasma membrane proteins. Plays a role in the proper organization of the cell membrane-associated actin cytoskeleton and promotes its destabilization. The polypeptide is Actin cytoskeleton-regulatory complex protein PAN1 (PAN1) (Podospora anserina (strain S / ATCC MYA-4624 / DSM 980 / FGSC 10383) (Pleurage anserina)).